The primary structure comprises 225 residues: Phosphoglycolate phosphatase (225 aa).

Residue D11 is the Nucleophile of the active site. Mg(2+)-binding residues include D11, D13, and D174.

This sequence belongs to the HAD-like hydrolase superfamily. CbbY/CbbZ/Gph/YieH family. The cofactor is Mg(2+).

The catalysed reaction is 2-phosphoglycolate + H2O = glycolate + phosphate. Its pathway is organic acid metabolism; glycolate biosynthesis; glycolate from 2-phosphoglycolate: step 1/1. Functionally, specifically catalyzes the dephosphorylation of 2-phosphoglycolate. Is involved in the dissimilation of the intracellular 2-phosphoglycolate formed during the DNA repair of 3'-phosphoglycolate ends, a major class of DNA lesions induced by oxidative stress. This chain is Phosphoglycolate phosphatase, found in Nitrosococcus oceani (strain ATCC 19707 / BCRC 17464 / JCM 30415 / NCIMB 11848 / C-107).